The chain runs to 91 residues: Small ribosomal subunit protein uS19 (91 aa).

It belongs to the universal ribosomal protein uS19 family.

Functionally, protein S19 forms a complex with S13 that binds strongly to the 16S ribosomal RNA. This chain is Small ribosomal subunit protein uS19, found in Methylobacillus flagellatus (strain ATCC 51484 / DSM 6875 / VKM B-1610 / KT).